The following is a 165-amino-acid chain: Ribosomal RNA large subunit methyltransferase H (165 aa).

S-adenosyl-L-methionine is bound at residue Gly-109.

The protein belongs to the RNA methyltransferase RlmH family. In terms of assembly, homodimer.

It is found in the cytoplasm. The catalysed reaction is pseudouridine(1915) in 23S rRNA + S-adenosyl-L-methionine = N(3)-methylpseudouridine(1915) in 23S rRNA + S-adenosyl-L-homocysteine + H(+). In terms of biological role, specifically methylates the pseudouridine at position 1915 (m3Psi1915) in 23S rRNA. This chain is Ribosomal RNA large subunit methyltransferase H, found in Methylorubrum populi (strain ATCC BAA-705 / NCIMB 13946 / BJ001) (Methylobacterium populi).